The sequence spans 171 residues: Adenine phosphoribosyltransferase (171 aa).

It belongs to the purine/pyrimidine phosphoribosyltransferase family. Homodimer.

The protein resides in the cytoplasm. The enzyme catalyses AMP + diphosphate = 5-phospho-alpha-D-ribose 1-diphosphate + adenine. Its pathway is purine metabolism; AMP biosynthesis via salvage pathway; AMP from adenine: step 1/1. Functionally, catalyzes a salvage reaction resulting in the formation of AMP, that is energically less costly than de novo synthesis. The protein is Adenine phosphoribosyltransferase (apt) of Prochlorococcus marinus subsp. pastoris (strain CCMP1986 / NIES-2087 / MED4).